Consider the following 428-residue polypeptide: Delta-aminolevulinic acid dehydratase, chloroplastic (428 aa).

The active-site Schiff-base intermediate with substrate is Lys-294. The 5-aminolevulinate site is built by Arg-304 and Lys-316. A Mg(2+)-binding site is contributed by Glu-332. Lys-347 (schiff-base intermediate with substrate) is an active-site residue. 5-aminolevulinate-binding residues include Ser-373 and Tyr-412.

Belongs to the ALAD family. As to quaternary structure, homooctamer. Mg(2+) is required as a cofactor.

It is found in the plastid. It localises to the chloroplast. The catalysed reaction is 2 5-aminolevulinate = porphobilinogen + 2 H2O + H(+). It functions in the pathway porphyrin-containing compound metabolism; protoporphyrin-IX biosynthesis; coproporphyrinogen-III from 5-aminolevulinate: step 1/4. Catalyzes an early step in the biosynthesis of tetrapyrroles. Binds two molecules of 5-aminolevulinate per subunit, each at a distinct site, and catalyzes their condensation to form porphobilinogen. This is Delta-aminolevulinic acid dehydratase, chloroplastic (HEMB) from Hordeum vulgare (Barley).